A 166-amino-acid chain; its full sequence is Large ribosomal subunit protein uL10 (166 aa).

Belongs to the universal ribosomal protein uL10 family. As to quaternary structure, part of the ribosomal stalk of the 50S ribosomal subunit. The N-terminus interacts with L11 and the large rRNA to form the base of the stalk. The C-terminus forms an elongated spine to which L12 dimers bind in a sequential fashion forming a multimeric L10(L12)X complex.

Forms part of the ribosomal stalk, playing a central role in the interaction of the ribosome with GTP-bound translation factors. The polypeptide is Large ribosomal subunit protein uL10 (Pseudomonas fluorescens (strain ATCC BAA-477 / NRRL B-23932 / Pf-5)).